The primary structure comprises 217 residues: HTH-type transcriptional regulator EthR (217 aa).

Positions 1–22 are disordered; that stretch reads MTTASQTRTPRGRRSARPSGDD. The region spanning 21 to 81 is the HTH tetR-type domain; the sequence is DDREAAILAT…SLIDPLIKRA (61 aa). A DNA-binding region (H-T-H motif) is located at residues 44–63; that stretch reads SVDDLAKGAGISRPTFYFYF.

In terms of assembly, homodimer.

Its function is as follows. Involved in the repression of teh monooxygenase EthA which is responsible of the formation of the active metabolite of ethionamide (ETH). The polypeptide is HTH-type transcriptional regulator EthR (ethR) (Mycolicibacterium smegmatis (strain ATCC 700084 / mc(2)155) (Mycobacterium smegmatis)).